A 267-amino-acid chain; its full sequence is B3 domain-containing protein Os02g0455800 (267 aa).

The TF-B3 DNA-binding region spans 30-131; sequence EKFLMPSDLC…RLFICCRLGT (102 aa). A disordered region spans residues 172-221; that stretch reads QARLHDGNQDGGGAPSRHVPSSGRRVEAQLSRVSSRRQRRTMKHSIPEPT. A compositionally biased stretch (basic residues) spans 205–214; it reads SSRRQRRTMK.

Its subcellular location is the nucleus. This is B3 domain-containing protein Os02g0455800 from Oryza sativa subsp. japonica (Rice).